A 426-amino-acid chain; its full sequence is Crinkler effector protein 4 (426 aa).

The segment at 20-57 (VEIDDSAKVSKLKKVIKEENPATITCDAKDLQLFLAKK) is LQLFLAK domain. Positions 59–107 (DAWLDGAGAAAVELDEHGHPQGCVQMDPTLWVKNPKHFGDNFQPGEGQV) are DWL domain. Positions 108 to 114 (HVLVVVP) match the HVLVXXP motif motif. Positions 115 to 426 (EGVVGSASET…RSIPTLSYFS (312 aa)) are effector domain.

It belongs to the Crinkler effector family.

The protein localises to the secreted. The protein resides in the host nucleus. Its function is as follows. Secreted effector that is critical to pathogenesis by suppressing plant immune responsess. Promotes Phytophthora infection by suppressing the H(2)O(2) accumulation and callose deposition. May induce cell death by regulating expression of cell death-related genes. In Phytophthora capsici, this protein is Crinkler effector protein 4.